The primary structure comprises 193 residues: Calcium-binding protein E63-1 (193 aa).

EF-hand domains follow at residues 35–70 (VEIK…LGIN), 71–106 (VSDE…IQAL), 127–162 (DVTE…IGEP), and 163–193 (LNEQ…RLLL). D48, N50, D52, R54, and E59 together coordinate Ca(2+). The Ca(2+) site is built by D140, D142, N144, E151, D176, D178, D180, R182, and E187.

In Drosophila melanogaster (Fruit fly), this protein is Calcium-binding protein E63-1 (Eip63F-1).